The primary structure comprises 255 residues: MSTLFIGDIHLSVEYPEITKNFFRFLQTEATQAESLYILGDLFDKWIGDDDPHPFYREVAAELFALKKKGIPCYFIHGNRDFLIGQAFADESGMILLPECKVIQLYDYNICILHGDTLCTKDTEYQIFRKIAHHRFIQRLFLCLPLSFRFYIAKKLRLQSGEQNKKKGEEIMDVDPQSVLDLMACHDVDWIIHGHTHRPAIHNIEMIVTPLLSSKKIARRAVLSAWHNEGSMIKVTFDAIELIFFPFRVSDFEKI.

Mn(2+) contacts are provided by Asp8, His10, Asp41, Asn79, and His114. A substrate-binding site is contributed by Asn79 to Arg80. Residues Asp122, Ser160, Asn164, Lys167, and His195 each coordinate substrate. Mn(2+) contacts are provided by His195 and His197.

The protein belongs to the LpxH family. Mn(2+) serves as cofactor.

The protein localises to the cell inner membrane. The catalysed reaction is UDP-2-N,3-O-bis[(3R)-3-hydroxytetradecanoyl]-alpha-D-glucosamine + H2O = 2-N,3-O-bis[(3R)-3-hydroxytetradecanoyl]-alpha-D-glucosaminyl 1-phosphate + UMP + 2 H(+). It participates in glycolipid biosynthesis; lipid IV(A) biosynthesis; lipid IV(A) from (3R)-3-hydroxytetradecanoyl-[acyl-carrier-protein] and UDP-N-acetyl-alpha-D-glucosamine: step 4/6. Hydrolyzes the pyrophosphate bond of UDP-2,3-diacylglucosamine to yield 2,3-diacylglucosamine 1-phosphate (lipid X) and UMP by catalyzing the attack of water at the alpha-P atom. Involved in the biosynthesis of lipid A, a phosphorylated glycolipid that anchors the lipopolysaccharide to the outer membrane of the cell. The sequence is that of UDP-2,3-diacylglucosamine hydrolase from Hamiltonella defensa subsp. Acyrthosiphon pisum (strain 5AT).